We begin with the raw amino-acid sequence, 145 residues long: Ribonuclease VapC24 (145 aa).

One can recognise a PINc domain in the interval 4–123 (IDTNILLYAQ…RHHGVDEFAT (120 aa)). Asp5 and Asp106 together coordinate Mg(2+).

Belongs to the PINc/VapC protein family. It depends on Mg(2+) as a cofactor.

Its function is as follows. Toxic component of a type II toxin-antitoxin (TA) system. An RNase. Its cognate antitoxin is VapB24. The polypeptide is Ribonuclease VapC24 (Mycobacterium tuberculosis (strain CDC 1551 / Oshkosh)).